A 215-amino-acid chain; its full sequence is Large ribosomal subunit protein uL3 (215 aa).

Q151 carries the post-translational modification N5-methylglutamine.

Belongs to the universal ribosomal protein uL3 family. In terms of assembly, part of the 50S ribosomal subunit. Forms a cluster with proteins L14 and L19. Post-translationally, methylated by PrmB.

Its function is as follows. One of the primary rRNA binding proteins, it binds directly near the 3'-end of the 23S rRNA, where it nucleates assembly of the 50S subunit. This is Large ribosomal subunit protein uL3 from Rickettsia massiliae (strain Mtu5).